A 247-amino-acid chain; its full sequence is uncharacterized protein (247 aa).

4 residues coordinate NAD(+): Leu-19, Asp-38, Asp-63, and Val-64. Ser-142 contributes to the substrate binding site. 3 residues coordinate NAD(+): Tyr-155, Lys-159, and Ser-190. Tyr-155 functions as the Proton acceptor in the catalytic mechanism.

Belongs to the short-chain dehydrogenases/reductases (SDR) family.

This is an uncharacterized protein from Mycobacterium bovis (strain ATCC BAA-935 / AF2122/97).